The primary structure comprises 195 residues: Pyruvoyl-dependent arginine decarboxylase AaxB (195 aa).

At Ser-53 the chain carries Pyruvic acid (Ser).

It belongs to the pyruvoyl-dependent arginine decarboxylase family. As to quaternary structure, trimer of an alpha-beta dimer. It depends on pyruvate as a cofactor.

It is found in the cytoplasm. The enzyme catalyses L-arginine + H(+) = agmatine + CO2. Its function is as follows. Part of the AaxABC system, catalyzes the decarboxylation of L-arginine. The arginine uptake by the bacterium in the macrophage may be a virulence factor against the host innate immune response. The sequence is that of Pyruvoyl-dependent arginine decarboxylase AaxB (aaxB) from Chlamydia trachomatis serovar D (strain ATCC VR-885 / DSM 19411 / UW-3/Cx).